The following is a 303-amino-acid chain: MTNTTMQPNRLRIALQKKGRLSQDCAILLKQCGVKINWNEQRLIAYAENLPIEILRVRDDDIPGLIFDGVVDLGIIGENVLEEEELGRRAANETVTYKKLRQLDFGDCRLSLAVDRDCHYENVKDLANRRIATSYPYLLKRYMNENGVSFKSCLLNGSVEVAPSAGIAYAICDLVSSGATLEANGLKEVDVIYRSKACLIQRAEPLESTKQALVDKLLTRIQGVQQAAESKYIMLHAPKEKLEKITALLPGVENPTILPLASDTTRVAMHVVSQENLFWETMEQLKEAGASSILVLPIEKMME.

This sequence belongs to the ATP phosphoribosyltransferase family. Long subfamily. Mg(2+) is required as a cofactor.

It is found in the cytoplasm. The enzyme catalyses 1-(5-phospho-beta-D-ribosyl)-ATP + diphosphate = 5-phospho-alpha-D-ribose 1-diphosphate + ATP. Its pathway is amino-acid biosynthesis; L-histidine biosynthesis; L-histidine from 5-phospho-alpha-D-ribose 1-diphosphate: step 1/9. Its activity is regulated as follows. Feedback inhibited by histidine. Functionally, catalyzes the condensation of ATP and 5-phosphoribose 1-diphosphate to form N'-(5'-phosphoribosyl)-ATP (PR-ATP). Has a crucial role in the pathway because the rate of histidine biosynthesis seems to be controlled primarily by regulation of HisG enzymatic activity. The polypeptide is ATP phosphoribosyltransferase (Haemophilus influenzae (strain PittEE)).